The chain runs to 274 residues: NAD kinase (274 aa).

The Proton acceptor role is filled by Asp50. NAD(+) contacts are provided by residues 50 to 51 (DG), 126 to 127 (NE), Arg152, Asp154, 165 to 170 (TAYNKS), and Ala189.

Belongs to the NAD kinase family. It depends on a divalent metal cation as a cofactor.

The protein localises to the cytoplasm. The enzyme catalyses NAD(+) + ATP = ADP + NADP(+) + H(+). Its function is as follows. Involved in the regulation of the intracellular balance of NAD and NADP, and is a key enzyme in the biosynthesis of NADP. Catalyzes specifically the phosphorylation on 2'-hydroxyl of the adenosine moiety of NAD to yield NADP. In Streptococcus gordonii (strain Challis / ATCC 35105 / BCRC 15272 / CH1 / DL1 / V288), this protein is NAD kinase.